Consider the following 391-residue polypeptide: Flagellin (391 aa).

Belongs to the bacterial flagellin family.

Its subcellular location is the secreted. The protein resides in the bacterial flagellum. In terms of biological role, flagellin is the subunit protein which polymerizes to form the filaments of bacterial flagella. The sequence is that of Flagellin (flaA) from Bordetella bronchiseptica (strain ATCC BAA-588 / NCTC 13252 / RB50) (Alcaligenes bronchisepticus).